A 234-amino-acid polypeptide reads, in one-letter code: uncharacterized protein (234 aa).

The span at 1 to 12 (MGSSSSSSLNNS) shows a compositional bias: low complexity. The disordered stretch occupies residues 1–184 (MGSSSSSSLN…TPYLSGANSR (184 aa)). Composition is skewed to polar residues over residues 21–40 (TPES…SILS) and 52–64 (KSTS…NLTP). Residues 66-77 (KSRWSFSSSKKS) show a composition bias toward low complexity. Residues 105-120 (GDFTPSLGNTPKSSFS) show a composition bias toward polar residues. The segment covering 152 to 167 (LGELFRDSIREEREES) has biased composition (basic and acidic residues).

In terms of assembly, interacts with RLK902. In terms of tissue distribution, expressed in stems, rosette leaves and roots and weakly in inflorescences.

This is an uncharacterized protein from Arabidopsis thaliana (Mouse-ear cress).